Consider the following 586-residue polypeptide: A-type ATP synthase subunit A (586 aa).

232 to 239 (GPFGSGKT) contributes to the ATP binding site.

The protein belongs to the ATPase alpha/beta chains family. Has multiple subunits with at least A(3), B(3), C, D, E, F, H, I and proteolipid K(x).

Its subcellular location is the cell membrane. The enzyme catalyses ATP + H2O + 4 H(+)(in) = ADP + phosphate + 5 H(+)(out). In terms of biological role, component of the A-type ATP synthase that produces ATP from ADP in the presence of a proton gradient across the membrane. The A chain is the catalytic subunit. This chain is A-type ATP synthase subunit A, found in Methanococcus maripaludis (strain C5 / ATCC BAA-1333).